Here is a 578-residue protein sequence, read N- to C-terminus: MNIHAIISDQIHKAMLAAGVPPYYRVQVRPSVKKKFGDYQINGLMATAKQLGVPSYFLAKKVVSFLQLNGIARQIDIAGPGFINIYLDSQWLATKIATAIASPRLGISLIELPQTIVVDYSSPNIAKEMHVGHIRSTIIGDASARILDFIGHKVIRINHIGDWGTHFGMLIAYLQQVEKNIDPEIPLSFLDQLYRQAKDKYDTDPSFAQEARNCVVKLQCGDSFCLKIWQKLVKITINENQKIYNRLNISLSHENIMGESKYNNMLPNIIADLKAKGLAVESAGATVIFLNEFQDKQGNPLGVIIQKKDGAYLYTTTDIACIKYRYEQLKADRIIYYVDSRQHQHLKQIWTIVRKAGYIPQTMQLDHHMFGMIFDKEGKPFKTRVGVNIKLNDLLDEALKRARCLILSKNMDVDPVELEHLAQVISISAIKYAELSKNRTTDYIFNWDDMLSFEGNTAPYILYAYTRIASILKRSNYNKQQILTGSILLEKEHEHLLAVRLLQYHETITTVAHDGRPHILCGYLYNLAVRFSSFYEHCSIINANSDIQRKSRLQLALLTSKTLQHGLSLLGIETVDKM.

The 'HIGH' region motif lies at 123–133; it reads PNIAKEMHVGH.

Belongs to the class-I aminoacyl-tRNA synthetase family. Monomer.

The protein localises to the cytoplasm. It catalyses the reaction tRNA(Arg) + L-arginine + ATP = L-arginyl-tRNA(Arg) + AMP + diphosphate. The chain is Arginine--tRNA ligase from Baumannia cicadellinicola subsp. Homalodisca coagulata.